Consider the following 62-residue polypeptide: Photosystem II reaction center X protein (62 aa).

A helical membrane pass occupies residues Ile-26 to Phe-46.

Belongs to the PsbX family. Type 2 subfamily. PSII consists of a core antenna complex that captures photons, and an electron transfer chain that converts photonic excitation into a charge separation. PSII forms dimeric complexes.

The protein localises to the cellular thylakoid membrane. Functionally, involved in the binding and/or turnover of quinones at the Q(B) site of Photosystem II. This chain is Photosystem II reaction center X protein, found in Prochlorococcus marinus subsp. pastoris (strain CCMP1986 / NIES-2087 / MED4).